The primary structure comprises 676 residues: Beta-taxilin (676 aa).

Disordered stretches follow at residues 1–55 and 71–131; these read MEND…DISE and AASL…EQKL. Polar residues-rich tracts occupy residues 8–25 and 34–45; these read EKQQ…QGQS and QPLSPTNQTSAQ. The span at 75 to 92 shows a compositional bias: basic and acidic residues; the sequence is VEKEGTTAETDKPEKEDV. Positions 93 to 105 are enriched in acidic residues; it reads GSMEDAECEDVNE. The segment covering 106-131 has biased composition (basic and acidic residues); the sequence is ESEKDKPAPGDASRAKEPSASKEQKL. Residues 157-461 adopt a coiled-coil conformation; that stretch reads EEKLDLLFKK…LYRKIKQAQL (305 aa). The tract at residues 464–486 is disordered; the sequence is EVNGNDILEEDDDANTNPSSSEQ.

Belongs to the taxilin family. As to expression, specifically expressed in skeletal and cardiac muscle.

The protein localises to the cytoplasm. Functionally, promotes neurite-outgrowth. May be involved in intracellular vesicle traffic. This chain is Beta-taxilin (TXLNB), found in Gallus gallus (Chicken).